Reading from the N-terminus, the 306-residue chain is Bifunctional protein FolD 2 (306 aa).

NADP(+)-binding positions include 169–171 (GHS) and isoleucine 235.

It belongs to the tetrahydrofolate dehydrogenase/cyclohydrolase family. Homodimer.

It carries out the reaction (6R)-5,10-methylene-5,6,7,8-tetrahydrofolate + NADP(+) = (6R)-5,10-methenyltetrahydrofolate + NADPH. The catalysed reaction is (6R)-5,10-methenyltetrahydrofolate + H2O = (6R)-10-formyltetrahydrofolate + H(+). It functions in the pathway one-carbon metabolism; tetrahydrofolate interconversion. Functionally, catalyzes the oxidation of 5,10-methylenetetrahydrofolate to 5,10-methenyltetrahydrofolate and then the hydrolysis of 5,10-methenyltetrahydrofolate to 10-formyltetrahydrofolate. In Mesorhizobium japonicum (strain LMG 29417 / CECT 9101 / MAFF 303099) (Mesorhizobium loti (strain MAFF 303099)), this protein is Bifunctional protein FolD 2.